Reading from the N-terminus, the 81-residue chain is Acylphosphatase (81 aa).

One can recognise an Acylphosphatase-like domain in the interval 1–81 (MYIFHGRVQG…VKYNDFQIRY (81 aa)). Catalysis depends on residues arginine 14 and asparagine 32.

Belongs to the acylphosphatase family.

The enzyme catalyses an acyl phosphate + H2O = a carboxylate + phosphate + H(+). In Picrophilus torridus (strain ATCC 700027 / DSM 9790 / JCM 10055 / NBRC 100828 / KAW 2/3), this protein is Acylphosphatase (acyP).